A 224-amino-acid chain; its full sequence is Holliday junction branch migration complex subunit RuvA (224 aa).

The domain I stretch occupies residues 1–67; it reads MISWLKGEKV…EDGTSLYGFI (67 aa). The tract at residues 68–146 is domain II; sequence EVNQRDLFRE…RFTDNDKTIH (79 aa). Positions 147–155 are flexible linker; that stretch reads ENKKGIEAN. Positions 156–224 are domain III; sequence QFSKYIDEIY…ILMKLSEKTT (69 aa).

The protein belongs to the RuvA family. As to quaternary structure, homotetramer. Forms an RuvA(8)-RuvB(12)-Holliday junction (HJ) complex. HJ DNA is sandwiched between 2 RuvA tetramers; dsDNA enters through RuvA and exits via RuvB. An RuvB hexamer assembles on each DNA strand where it exits the tetramer. Each RuvB hexamer is contacted by two RuvA subunits (via domain III) on 2 adjacent RuvB subunits; this complex drives branch migration. In the full resolvosome a probable DNA-RuvA(4)-RuvB(12)-RuvC(2) complex forms which resolves the HJ.

The protein resides in the cytoplasm. In terms of biological role, the RuvA-RuvB-RuvC complex processes Holliday junction (HJ) DNA during genetic recombination and DNA repair, while the RuvA-RuvB complex plays an important role in the rescue of blocked DNA replication forks via replication fork reversal (RFR). RuvA specifically binds to HJ cruciform DNA, conferring on it an open structure. The RuvB hexamer acts as an ATP-dependent pump, pulling dsDNA into and through the RuvAB complex. HJ branch migration allows RuvC to scan DNA until it finds its consensus sequence, where it cleaves and resolves the cruciform DNA. This is Holliday junction branch migration complex subunit RuvA from Prochlorococcus marinus (strain NATL1A).